The chain runs to 79 residues: Alpha-elapitoxin-Aa2e (79 aa).

Intrachain disulfides connect Cys3/Cys20, Cys13/Cys41, Cys26/Cys30, Cys45/Cys56, and Cys57/Cys62.

It belongs to the three-finger toxin family. Long-chain subfamily. Type II alpha-neurotoxin sub-subfamily. As to expression, expressed by the venom gland.

Its subcellular location is the secreted. In terms of biological role, binds with high affinity to muscular (alpha-1/CHRNA1) and neuronal (alpha-7/CHRNA7) nicotinic acetylcholine receptor (nAChR) and inhibits acetylcholine from binding to the receptor, thereby impairing neuromuscular and neuronal transmission. Produces paralysis, clear dyspnea and lethality on mice. The protein is Alpha-elapitoxin-Aa2e of Acanthophis antarcticus (Common death adder).